The primary structure comprises 101 residues: Protein translation factor SUI1 homolog (101 aa).

This sequence belongs to the SUI1 family.

This is Protein translation factor SUI1 homolog from Methanosphaera stadtmanae (strain ATCC 43021 / DSM 3091 / JCM 11832 / MCB-3).